The following is a 472-amino-acid chain: Eukaryotic translation initiation factor 2 subunit 3 (472 aa).

Alanine 2 carries the post-translational modification N-acetylalanine. Position 16 is a phosphoserine (serine 16). The tr-type G domain maps to 39 to 248; sequence QATINIGTIG…IVKKIPVPPR (210 aa). The segment at 48–55 is G1; it reads GHVAHGKS. 51-56 contacts GTP; that stretch reads AHGKST. The G2 stretch occupies residues 76–80; that stretch reads NITIK. The tract at residues 134–137 is G3; that stretch reads DCPG. GTP is bound by residues 190–193 and 225–227; these read NKID and SAQ. Positions 190–193 are G4; that stretch reads NKID. A G5 region spans residues 225–227; the sequence is SAQ. Positions 457–469 are interacts with CDC123; that stretch reads GQIRRGVTIKPTV.

This sequence belongs to the TRAFAC class translation factor GTPase superfamily. Classic translation factor GTPase family. EIF2G subfamily. As to quaternary structure, eukaryotic translation initiation factor 2 eIF2 is a heterotrimeric complex composed of an alpha (EIF2S1), a beta (EIF2S2) and a gamma (EIF2S3) chain. eIF2 is member of the 43S pre-initiation complex (43S PIC). Interacts (via C-terminus) with CDC123; the interaction is direct.

The protein localises to the cytoplasm. The protein resides in the cytosol. It catalyses the reaction GTP + H2O = GDP + phosphate + H(+). Its function is as follows. Member of the eIF2 complex that functions in the early steps of protein synthesis by forming a ternary complex with GTP and initiator tRNA. This complex binds to a 40S ribosomal subunit, followed by mRNA binding to form the 43S pre-initiation complex (43S PIC). Junction of the 60S ribosomal subunit to form the 80S initiation complex is preceded by hydrolysis of the GTP bound to eIF2 and release of an eIF2-GDP binary complex. In order for eIF2 to recycle and catalyze another round of initiation, the GDP bound to eIF2 must exchange with GTP by way of a reaction catalyzed by eIF-2B. This Sus scrofa (Pig) protein is Eukaryotic translation initiation factor 2 subunit 3 (EIF2S3).